The following is a 281-amino-acid chain: Lipoyl synthase (281 aa).

[4Fe-4S] cluster is bound by residues Cys35, Cys40, Cys46, Cys61, Cys65, Cys68, and Ser274. A Radical SAM core domain is found at 47–263 (FGCGQATFLI…RDEALALGFR (217 aa)).

The protein belongs to the radical SAM superfamily. Lipoyl synthase family. Requires [4Fe-4S] cluster as cofactor.

It is found in the cytoplasm. The catalysed reaction is [[Fe-S] cluster scaffold protein carrying a second [4Fe-4S](2+) cluster] + N(6)-octanoyl-L-lysyl-[protein] + 2 oxidized [2Fe-2S]-[ferredoxin] + 2 S-adenosyl-L-methionine + 4 H(+) = [[Fe-S] cluster scaffold protein] + N(6)-[(R)-dihydrolipoyl]-L-lysyl-[protein] + 4 Fe(3+) + 2 hydrogen sulfide + 2 5'-deoxyadenosine + 2 L-methionine + 2 reduced [2Fe-2S]-[ferredoxin]. The protein operates within protein modification; protein lipoylation via endogenous pathway; protein N(6)-(lipoyl)lysine from octanoyl-[acyl-carrier-protein]: step 2/2. Its function is as follows. Catalyzes the radical-mediated insertion of two sulfur atoms into the C-6 and C-8 positions of the octanoyl moiety bound to the lipoyl domains of lipoate-dependent enzymes, thereby converting the octanoylated domains into lipoylated derivatives. The chain is Lipoyl synthase from Trichlorobacter lovleyi (strain ATCC BAA-1151 / DSM 17278 / SZ) (Geobacter lovleyi).